The chain runs to 99 residues: Nucleoid-associated protein LCABL_24440 (99 aa).

The protein belongs to the YbaB/EbfC family. In terms of assembly, homodimer.

It is found in the cytoplasm. It localises to the nucleoid. Binds to DNA and alters its conformation. May be involved in regulation of gene expression, nucleoid organization and DNA protection. The protein is Nucleoid-associated protein LCABL_24440 of Lacticaseibacillus casei (strain BL23) (Lactobacillus casei).